Consider the following 423-residue polypeptide: Glucose-1-phosphate adenylyltransferase (423 aa).

Alpha-D-glucose 1-phosphate is bound by residues tyrosine 108, glycine 173, 188–189 (EK), and serine 207.

Belongs to the bacterial/plant glucose-1-phosphate adenylyltransferase family. As to quaternary structure, homotetramer.

The enzyme catalyses alpha-D-glucose 1-phosphate + ATP + H(+) = ADP-alpha-D-glucose + diphosphate. The protein operates within glycan biosynthesis; glycogen biosynthesis. Functionally, involved in the biosynthesis of ADP-glucose, a building block required for the elongation reactions to produce glycogen. Catalyzes the reaction between ATP and alpha-D-glucose 1-phosphate (G1P) to produce pyrophosphate and ADP-Glc. The polypeptide is Glucose-1-phosphate adenylyltransferase (Francisella tularensis subsp. tularensis (strain WY96-3418)).